The sequence spans 75 residues: UPF0352 protein YejL (75 aa).

It belongs to the UPF0352 family.

In Shigella sonnei (strain Ss046), this protein is UPF0352 protein YejL.